The primary structure comprises 191 residues: Large ribosomal subunit protein uL6 (191 aa).

The protein belongs to the universal ribosomal protein uL6 family. Part of the 50S ribosomal subunit.

In terms of biological role, this protein binds to the 23S rRNA, and is important in its secondary structure. It is located near the subunit interface in the base of the L7/L12 stalk, and near the tRNA binding site of the peptidyltransferase center. The polypeptide is Large ribosomal subunit protein uL6 (Gloeobacter violaceus (strain ATCC 29082 / PCC 7421)).